We begin with the raw amino-acid sequence, 123 residues long: uncharacterized protein (123 aa).

The first 20 residues, 1 to 20 (MARTLALRASAGLVAGMAMA), serve as a signal peptide directing secretion.

This is an uncharacterized protein from Mycobacterium bovis (strain ATCC BAA-935 / AF2122/97).